Consider the following 67-residue polypeptide: Guanine nucleotide-binding protein G(I)/G(S)/G(O) subunit gamma-13 (67 aa).

Position 64 is a cysteine methyl ester (cysteine 64). Cysteine 64 carries S-farnesyl cysteine lipidation. The propeptide at 65-67 (TIL) is removed in mature form.

It belongs to the G protein gamma family. G proteins are composed of 3 units, alpha, beta and gamma.

It localises to the cell membrane. In terms of biological role, guanine nucleotide-binding proteins (G proteins) are involved as a modulator or transducer in various transmembrane signaling systems. The beta and gamma chains are required for the GTPase activity, for replacement of GDP by GTP, and for G protein-effector interaction. This chain is Guanine nucleotide-binding protein G(I)/G(S)/G(O) subunit gamma-13 (Gng13), found in Mus musculus (Mouse).